The following is a 79-amino-acid chain: Translational regulator CsrA (79 aa).

Belongs to the CsrA/RsmA family. In terms of assembly, homodimer; the beta-strands of each monomer intercalate to form a hydrophobic core, while the alpha-helices form wings that extend away from the core.

The protein localises to the cytoplasm. Its function is as follows. A translational regulator that binds mRNA to regulate translation initiation and/or mRNA stability. Usually binds in the 5'-UTR at or near the Shine-Dalgarno sequence preventing ribosome-binding, thus repressing translation. Its main target seems to be the major flagellin gene, while its function is anatagonized by FliW. This Shouchella clausii (strain KSM-K16) (Alkalihalobacillus clausii) protein is Translational regulator CsrA.